A 147-amino-acid chain; its full sequence is 3-dehydroquinate dehydratase (147 aa).

Residue Y23 is the Proton acceptor of the active site. The substrate site is built by N75, H81, and D88. H101 serves as the catalytic Proton donor. Residues 102 to 103 (LS) and R112 contribute to the substrate site.

The protein belongs to the type-II 3-dehydroquinase family. In terms of assembly, homododecamer.

It catalyses the reaction 3-dehydroquinate = 3-dehydroshikimate + H2O. It participates in metabolic intermediate biosynthesis; chorismate biosynthesis; chorismate from D-erythrose 4-phosphate and phosphoenolpyruvate: step 3/7. Catalyzes a trans-dehydration via an enolate intermediate. The polypeptide is 3-dehydroquinate dehydratase (Thioalkalivibrio sulfidiphilus (strain HL-EbGR7)).